Reading from the N-terminus, the 152-residue chain is UPF0735 ACT domain-containing protein SAS1579 (152 aa).

One can recognise an ACT domain in the interval 75–150 (TLILYVTDIV…YVSKVELISM (76 aa)).

This sequence belongs to the UPF0735 family.

The protein is UPF0735 ACT domain-containing protein SAS1579 of Staphylococcus aureus (strain MSSA476).